Consider the following 457-residue polypeptide: MSIATINPATGETVKTFTPTTQDEVEDAIARAYARFDNYRHTTFTQRAKWANATADLLEAEANQSAALMTLEMGKTLQSAKDEAMKCAKGFRYYAEKAETLLADEPAEAAAVGASKALARYQPLGVVLAVMPWNFPLWQTVRFAAPALMAGNVGLLKHASNVPQCALYLADVIARGGFPEDCFQTLLISANGVEAILRDPRVAAATLTGSEPAGQAVGAIAGNEIKPTVLELGGSDPFIVMPSADLDAAVATAVTGRVQNNGQSCIAAKRFIAHADIYDEFVEKFVARMETLRVGDPTDPDTDVGPLATESGRAQVEQQVDAAAAAGAVIRCGGKRPDRPGWFYPPTVITDITKDMALYTDEVFGPVASVYCATNIDDAIEIANATPFGLGSNAWTQNESEQRHFIDNIVAGQVFINGMTVSYPELPFGGIKRSGYGRELSTHGIREFCNIKTVWIA.

NADP(+)-binding positions include 133–134 (WN), 157–160 (KHAS), and 209–210 (GS). Glutamate 231 (proton acceptor) is an active-site residue. Leucine 232 contacts NADP(+). Residue cysteine 265 is the Nucleophile of the active site. Residue glutamate 362 participates in NADP(+) binding.

It belongs to the aldehyde dehydrogenase family.

The catalysed reaction is succinate semialdehyde + NADP(+) + H2O = succinate + NADPH + 2 H(+). Its function is as follows. Catalyzes the NADP(+)-dependent oxidation of succinate semialdehyde to succinate. It is believed to be the main source of succinate semialdehyde dehydrogenase activity in Mycobacterium. The polypeptide is Succinate-semialdehyde dehydrogenase [NADP(+)] (gabD1) (Mycobacterium leprae (strain TN)).